The chain runs to 298 residues: GTPase Era (298 aa).

The 168-residue stretch at 3-170 (KSGFVTIVGR…VELMKKAMPE (168 aa)) folds into the Era-type G domain. The segment at 11–18 (GRPNVGKS) is G1. Position 11-18 (11-18 (GRPNVGKS)) interacts with GTP. Residues 37–41 (QTTRN) form a G2 region. Positions 58 to 61 (DTPG) are G3. GTP contacts are provided by residues 58–62 (DTPGI) and 120–123 (NKVD). The segment at 120-123 (NKVD) is G4. The segment at 149–151 (ISA) is G5. The 78-residue stretch at 201–278 (LRDEVPHGIA…NLKIWVKVRK (78 aa)) folds into the KH type-2 domain.

Belongs to the TRAFAC class TrmE-Era-EngA-EngB-Septin-like GTPase superfamily. Era GTPase family. In terms of assembly, monomer.

It is found in the cytoplasm. It localises to the cell membrane. Functionally, an essential GTPase that binds both GDP and GTP, with rapid nucleotide exchange. Plays a role in 16S rRNA processing and 30S ribosomal subunit biogenesis and possibly also in cell cycle regulation and energy metabolism. This is GTPase Era from Clostridium beijerinckii (strain ATCC 51743 / NCIMB 8052) (Clostridium acetobutylicum).